A 261-amino-acid chain; its full sequence is Ribonuclease HII (261 aa).

Residues 71–259 (QYIAGVDEVG…VKEAKLHFES (189 aa)) form the RNase H type-2 domain. Positions 77, 78, and 169 each coordinate a divalent metal cation.

This sequence belongs to the RNase HII family. The cofactor is Mn(2+). Mg(2+) serves as cofactor.

Its subcellular location is the cytoplasm. It catalyses the reaction Endonucleolytic cleavage to 5'-phosphomonoester.. Its function is as follows. Endonuclease that specifically degrades the RNA of RNA-DNA hybrids. The sequence is that of Ribonuclease HII from Listeria innocua serovar 6a (strain ATCC BAA-680 / CLIP 11262).